The primary structure comprises 336 residues: DNA-directed RNA polymerase subunit alpha (336 aa).

The interval M1–D232 is alpha N-terminal domain (alpha-NTD). Positions F248–Y336 are alpha C-terminal domain (alpha-CTD).

The protein belongs to the RNA polymerase alpha chain family. As to quaternary structure, homodimer. The RNAP catalytic core consists of 2 alpha, 1 beta, 1 beta' and 1 omega subunit. When a sigma factor is associated with the core the holoenzyme is formed, which can initiate transcription.

The catalysed reaction is RNA(n) + a ribonucleoside 5'-triphosphate = RNA(n+1) + diphosphate. In terms of biological role, DNA-dependent RNA polymerase catalyzes the transcription of DNA into RNA using the four ribonucleoside triphosphates as substrates. In Rhizobium rhizogenes (strain K84 / ATCC BAA-868) (Agrobacterium radiobacter), this protein is DNA-directed RNA polymerase subunit alpha.